The following is a 315-amino-acid chain: MSESLRIIFAGTPDFAARHLDALLSSGHNVVGVFTQPDRPAGRGKKLMPSPVKVLAEEKGLPVFQPVSLRPQENQQLVADLQADVMVVVAYGLILPKAVLEMPRLGCINVHGSLLPRWRGAAPIQRSLWAGDAETGVTIMQMDVGLDTGDMLYKLSCPITAEDTSGTLYDKLAELGPQGLITTLKQLADGTAKPEVQDKTLVTYAEKLSKEEARIDWSLSAAQLERCIRAFNPWPMSWLEIERQPVKVWKASVIDTATNAAPGTILEANKQGIQVATGDGILNLLSLQPAGKKAMSAQDLLNSRREWFVPGNRLA.

Position 113–116 (Ser-113–Pro-116) interacts with (6S)-5,6,7,8-tetrahydrofolate.

The protein belongs to the Fmt family.

The enzyme catalyses L-methionyl-tRNA(fMet) + (6R)-10-formyltetrahydrofolate = N-formyl-L-methionyl-tRNA(fMet) + (6S)-5,6,7,8-tetrahydrofolate + H(+). In terms of biological role, attaches a formyl group to the free amino group of methionyl-tRNA(fMet). The formyl group appears to play a dual role in the initiator identity of N-formylmethionyl-tRNA by promoting its recognition by IF2 and preventing the misappropriation of this tRNA by the elongation apparatus. The sequence is that of Methionyl-tRNA formyltransferase from Shigella boydii serotype 18 (strain CDC 3083-94 / BS512).